Here is a 454-residue protein sequence, read N- to C-terminus: Phosphoglucosamine mutase (454 aa).

Ser-104 functions as the Phosphoserine intermediate in the catalytic mechanism. Mg(2+) is bound by residues Ser-104, Asp-241, Asp-243, and Asp-245. Residue Ser-104 is modified to Phosphoserine.

It belongs to the phosphohexose mutase family. Mg(2+) serves as cofactor. In terms of processing, activated by phosphorylation.

It catalyses the reaction alpha-D-glucosamine 1-phosphate = D-glucosamine 6-phosphate. Its function is as follows. Catalyzes the conversion of glucosamine-6-phosphate to glucosamine-1-phosphate. This Paenarthrobacter aurescens (strain TC1) protein is Phosphoglucosamine mutase.